The primary structure comprises 730 residues: Regulatory factor X 4 (730 aa).

The segment covering 30-41 (YSSHTSLGNISN) has biased composition (polar residues). The segment at 30–59 (YSSHTSLGNISNDETDEEKENRASKPHSTP) is disordered. The segment at residues 61 to 136 (TLQWLGENYE…YHYYGIAVKE (76 aa)) is a DNA-binding region (RFX-type winged-helix). Positions 500–532 (EPAISTPSPVPFSPAASSSSVEIPSATSPVSNQ) are disordered. The span at 512–528 (SPAASSSSVEIPSATSP) shows a compositional bias: low complexity.

This sequence belongs to the RFX family.

Its subcellular location is the nucleus. In terms of biological role, required for neural tube ciliogenesis during embryogenesis. The protein is Regulatory factor X 4 of Xenopus laevis (African clawed frog).